The sequence spans 716 residues: Beta-1,2-glucosyltransferase (716 aa).

Positions 52, 99, 101, 102, 175, 176, 278, 279, 343, and 349 each coordinate sophorose. E176 acts as the Proton donor/acceptor in catalysis. Beta-D-glucose is bound by residues E176, G278, and W279. E343 serves as the catalytic Nucleophile. Residues R349, K358, and E361 each contribute to the beta-D-glucose site. Y378 contributes to the sophorose binding site. Beta-D-glucose-binding residues include S708 and Y709.

It belongs to the glycosyl hydrolase 35 family. In terms of assembly, homidimer.

The protein resides in the cytoplasm. The catalysed reaction is a D-glucoside + [(1-&gt;2)-beta-D-glucosyl](n) = a beta-D-glucosyl-(1-&gt;2)-D-glucoside + [(1-&gt;2)-beta-D-glucosyl](n-1). Glycosyltransferase acting on beta-1,2-glucooligosaccharides. Catalyzes the transfer of a glucosyl residue from the non-reducing end of a 1,2-beta-D-glucan to a glucose residue of an acceptor molecule, forming a beta-1,2-glucosidic bond. The beta-1,2-linked glucose dimer sophorose is the preferred donor in vitro. Has a very broad specificity for the acceptor and can act on various aryl- and alkyl-glucosides. Does not show any hydrolytic activity. This Ignavibacterium album (strain DSM 19864 / JCM 16511 / NBRC 101810 / Mat9-16) protein is Beta-1,2-glucosyltransferase.